We begin with the raw amino-acid sequence, 200 residues long: Diadenylate cyclase (200 aa).

The chain crosses the membrane as a helical span at residues 5–25 (ILLFITLIFLLLLFVFLIAFA). A DAC domain is found at 28-185 (NKRVRNYVVR…KGVIKTLSSN (158 aa)).

It belongs to the adenylate cyclase family. DacB/CdaS subfamily. As to quaternary structure, probably oligomerizes.

It is found in the cell membrane. The catalysed reaction is 2 ATP = 3',3'-c-di-AMP + 2 diphosphate. Catalyzes the condensation of 2 ATP molecules into cyclic di-AMP (c-di-AMP), a second messenger used to regulate differing processes in different bacteria. The protein is Diadenylate cyclase of Mycoplasma genitalium (strain ATCC 33530 / DSM 19775 / NCTC 10195 / G37) (Mycoplasmoides genitalium).